Consider the following 248-residue polypeptide: GTP cyclohydrolase 1 type 2 homolog (248 aa).

A divalent metal cation contacts are provided by H64, H65, D101, H216, and E220.

Belongs to the GTP cyclohydrolase I type 2/NIF3 family. As to quaternary structure, homohexamer.

This Borreliella burgdorferi (strain ATCC 35210 / DSM 4680 / CIP 102532 / B31) (Borrelia burgdorferi) protein is GTP cyclohydrolase 1 type 2 homolog.